Here is a 910-residue protein sequence, read N- to C-terminus: Protein translocase subunit SecA (910 aa).

ATP is bound by residues glutamine 89, 107–111 (GEGKT), and aspartate 502. Zn(2+)-binding residues include cysteine 894, cysteine 896, cysteine 905, and histidine 906.

This sequence belongs to the SecA family. As to quaternary structure, monomer and homodimer. Part of the essential Sec protein translocation apparatus which comprises SecA, SecYEG and auxiliary proteins SecDF-YajC and YidC. It depends on Zn(2+) as a cofactor.

It is found in the cell inner membrane. The protein localises to the cytoplasm. The catalysed reaction is ATP + H2O + cellular proteinSide 1 = ADP + phosphate + cellular proteinSide 2.. In terms of biological role, part of the Sec protein translocase complex. Interacts with the SecYEG preprotein conducting channel. Has a central role in coupling the hydrolysis of ATP to the transfer of proteins into and across the cell membrane, serving both as a receptor for the preprotein-SecB complex and as an ATP-driven molecular motor driving the stepwise translocation of polypeptide chains across the membrane. This chain is Protein translocase subunit SecA, found in Mesorhizobium japonicum (strain LMG 29417 / CECT 9101 / MAFF 303099) (Mesorhizobium loti (strain MAFF 303099)).